The following is a 901-amino-acid chain: HTH-type transcriptional regulator MalT (901 aa).

39 to 46 (SPAGYGKT) provides a ligand contact to ATP. One can recognise an HTH luxR-type domain in the interval 829–894 (ELIHTSPLTQ…AAVQHAQKLL (66 aa)). Residues 853-872 (NEQIAGELEVAATTIKTHIR) constitute a DNA-binding region (H-T-H motif).

It belongs to the MalT family. As to quaternary structure, monomer in solution. Oligomerizes to an active state in the presence of the positive effectors ATP and maltotriose.

With respect to regulation, activated by ATP and maltotriose, which are both required for DNA binding. Functionally, positively regulates the transcription of the maltose regulon whose gene products are responsible for uptake and catabolism of malto-oligosaccharides. Specifically binds to the promoter region of its target genes, recognizing a short DNA motif called the MalT box. In Shigella sonnei (strain Ss046), this protein is HTH-type transcriptional regulator MalT.